A 193-amino-acid polypeptide reads, in one-letter code: Ancillary SecYEG translocon subunit (193 aa).

At 1 to 8 (MLNISKKN) the chain is on the cytoplasmic side. A helical membrane pass occupies residues 9 to 29 (IIFFILFFLIISLILFNWKYF). At 30–193 (SLVNKENLES…MKLNELKEQN (164 aa)) the chain is on the periplasmic side.

It belongs to the YfgM family. As to quaternary structure, interacts with the SecYEG translocon. Forms a complex with PpiD.

The protein localises to the cell inner membrane. May mediate protein transfer from the SecYEG translocon to the periplasmic chaperone network via its periplasmic C-terminal region. This Buchnera aphidicola subsp. Acyrthosiphon pisum (strain APS) (Acyrthosiphon pisum symbiotic bacterium) protein is Ancillary SecYEG translocon subunit.